Consider the following 92-residue polypeptide: Arrestin-C (92 aa).

This sequence belongs to the arrestin family. Homodimer; disulfide-linked in response to retinal illumination. Interacts with CXCR4; the interaction is dependent on the C-terminal phosphorylation of CXCR4 and modulates the calcium ion mobilization activity of CXCR4. Interacts with GPR84. In terms of tissue distribution, retina and pineal gland.

It localises to the photoreceptor inner segment. The protein localises to the cell projection. Its subcellular location is the cilium. The protein resides in the photoreceptor outer segment. Its function is as follows. May play a role in an as yet undefined retina-specific signal transduction. Could bind to photoactivated-phosphorylated red/green opsins. This is Arrestin-C (Arr3) from Rattus norvegicus (Rat).